The primary structure comprises 131 residues: Beta/delta-urticatoxin-Dm2a (131 aa).

An N-terminal signal peptide occupies residues M1–A24. Positions S25–E69 are excised as a propeptide. 6 disulfide bridges follow: C72–C88, C79–C93, C87–C101, C103–C117, C110–C122, and C116–C130.

Belongs to the urticatoxin-2 family. In terms of tissue distribution, expressed in trichomes, that are stiff epidermal hairs located on the surface of petioles and leaves.

The protein localises to the secreted. Plant defense neurotoxin that causes pain and systemic symptoms in mammals via modulation of voltage-gated sodium channels (Nav). Potent modulator of human Nav1.5/SCN5A (EC(50)=55 nM), Nav1.6/SCN8A (EC(50)=0.86 nM), and Nav1.7/SCN9A (EC(50)=208 nM), where it shifts the activation threshold to more negative potentials and delays fast inactivation. Also shifts the voltage-dependence of steady-state fast inactivation of Nav1.6/SCN8A, but not that of Nav1.5/SCN5A or Nav1.7/SCN9A. On Nav1.7/SCN9A, principally acts by binding to extracellular loops of domain IV (Nav site 3). In vivo, intraplantar injection into mice causes numerous dose-dependent, immediate, and long-lasting spontaneous pain behaviors, while no swelling is observed in the injected paw. At the highest doses tested, systemic symptoms including hypokinesia and hypersalivation are observed. The sequence is that of Beta/delta-urticatoxin-Dm2a from Dendrocnide moroides (Gympie stinging tree).